The primary structure comprises 396 residues: Protein GTS1 (396 aa).

The 128-residue stretch at 14 to 141 (DRELKELINS…FRYDEIKPED (128 aa)) folds into the Arf-GAP domain. The C4-type zinc finger occupies 30-53 (CGECGNFYPTWCSVNLGVFLCGRC). The span at 148–161 (DFDGESDRFDERNR) shows a compositional bias: basic and acidic residues. 2 disordered regions span residues 148–194 (DFDG…SGSR) and 233–266 (KSSSSRNSVSAAATTSTPPLPRRRATTSGPQPAI). At serine 153 the chain carries Phosphoserine. A Phosphotyrosine modification is found at tyrosine 181. Phosphoserine is present on residues serine 184 and serine 187. Residues 193–234 (SRYSRQLAELKDMGFGDTNKNLDALSSAHGNINRAIDYLEKS) enclose the UBA domain. The span at 234-249 (SSSSRNSVSAAATTST) shows a compositional bias: low complexity. The residue at position 240 (serine 240) is a Phosphoserine. A Phosphothreonine modification is found at threonine 249.

It is found in the nucleus. Appears to modulate the timing of budding to obtain an appropriate cell size independent of the DNA replication cycle. Transcription factor involved in both heat resistance and flocculation. In Saccharomyces cerevisiae (strain ATCC 204508 / S288c) (Baker's yeast), this protein is Protein GTS1 (GTS1).